The chain runs to 374 residues: Arrestin domain-containing protein 15 (374 aa).

The segment at 344-374 (HHLNRSKAKVSKTEQQQRKTRNIVEENPYFR) is disordered.

Belongs to the arrestin family.

The sequence is that of Arrestin domain-containing protein 15 (arrd-15) from Caenorhabditis elegans.